The sequence spans 272 residues: 3-methyl-2-oxobutanoate hydroxymethyltransferase (272 aa).

Mg(2+) is bound by residues Asp43 and Asp82. Residues 43–44 (DS), Asp82, and Lys112 contribute to the 3-methyl-2-oxobutanoate site. Glu114 contributes to the Mg(2+) binding site. Glu179 (proton acceptor) is an active-site residue.

This sequence belongs to the PanB family. Homodecamer; pentamer of dimers. Mg(2+) is required as a cofactor.

It is found in the cytoplasm. It carries out the reaction 3-methyl-2-oxobutanoate + (6R)-5,10-methylene-5,6,7,8-tetrahydrofolate + H2O = 2-dehydropantoate + (6S)-5,6,7,8-tetrahydrofolate. It functions in the pathway cofactor biosynthesis; (R)-pantothenate biosynthesis; (R)-pantoate from 3-methyl-2-oxobutanoate: step 1/2. Functionally, catalyzes the reversible reaction in which hydroxymethyl group from 5,10-methylenetetrahydrofolate is transferred onto alpha-ketoisovalerate to form ketopantoate. The chain is 3-methyl-2-oxobutanoate hydroxymethyltransferase from Staphylococcus aureus (strain JH1).